We begin with the raw amino-acid sequence, 137 residues long: Large ribosomal subunit protein eL28 (137 aa).

S2 bears the N-acetylserine mark. Residues K58 and K65 each participate in a glycyl lysine isopeptide (Lys-Gly) (interchain with G-Cter in SUMO2) cross-link. The residue at position 115 (S115) is a Phosphoserine.

It belongs to the eukaryotic ribosomal protein eL28 family. Component of the large ribosomal subunit.

It is found in the cytoplasm. Component of the large ribosomal subunit. The ribosome is a large ribonucleoprotein complex responsible for the synthesis of proteins in the cell. This is Large ribosomal subunit protein eL28 (RPL28) from Bos taurus (Bovine).